Reading from the N-terminus, the 1036-residue chain is MDNEDKISISAKEEKILSFWKEQDIFQKTLDNREGCPTFSFYDGPPFATGLPHYGHLLAGTIKDVVCRYASMDGHYVPRRFGWDCHGVPVEYEVEKSLGLTEPGAIERFGVANFNEECRKIVFRYADEWKYFVDRIGRWVDFSATWRTMDLSFMESVWWVFRSLYDQGLVYEGTKVVPFSTKLGTPLSNFEAGQNYKEVDDPSVVIKFALQDNQGFLLAWTTTPWTLVSNMALAVHPELTYVRIKDKESGDEYILGQESLPRWFPDRESYEWIGQLSGKSLVGQSYEPLFPYFQDKKELEAFRILPADFIEESEGTGIVHMAPAFGEADFFACQEHNVPLVCPVDNQGCYTAEVKDFVGEYIKSADKGIARRLKNENKLFYQGTVRHRYPFCWRTDSPLIYKAVNSWFVAVEKVKSKMLKANESIHWTPGHIKQGRFGKWLEGARDWAISRNRYWGTPIPIWRSDDGELLVIGSIQELEALSGQKIVDLHRHFIDEIEINQNGKSFRRIPYVFDCWFDSGAMPYAQNHYPFERAEETEACFPADFIAEGLDQTRGWFYTLTVIAAALFDQPAFKNVIVNGIILAEDGNKMSKRLNNYPSPKMIMDAYGADALRLYLLNSVVVKAEDLRFSDKGVESVLKQVLLPLSNALAFYKTYAELYGFDPKETDNIELAEIDCWILSSLYSLVGKTRESMSQYDLHAAVNPFVDFIEDLTNWYIRRSRRRFWDAEDSADRRAAFSTLYEVLVVFSKVIAPFIPFIAEDMYQQLRGETDPESVHLCDFPHVVLEKILPDLERKMQDIREIVALGHSLRKEHKLKVRQPLQNVYIVGSKERMEALAQVGSLIGEELNVKDVHFCSETPEYVTTLIKPNFRTLGKKVGNRLPEIQRALARLPQEQIRAFMHKGQMVVSLGEETISLDKEDITVSWASAEGFVARSSASFVAVLDCQLTEPLIMEGIARELVNKINTMRRNGKLHVSDRIAIRLHAPVIVQEAFALHKEYICEETLTTSVSVIDYKEGEEWDINGHAVSFVLERVER.

The 'HIGH' region signature appears at 46-56 (PFATGLPHYGH). Positions 589-593 (KMSKR) match the 'KMSKS' region motif. K592 provides a ligand contact to ATP.

It belongs to the class-I aminoacyl-tRNA synthetase family. IleS type 2 subfamily. In terms of assembly, monomer. The cofactor is Zn(2+).

The protein localises to the cytoplasm. The enzyme catalyses tRNA(Ile) + L-isoleucine + ATP = L-isoleucyl-tRNA(Ile) + AMP + diphosphate. Functionally, catalyzes the attachment of isoleucine to tRNA(Ile). As IleRS can inadvertently accommodate and process structurally similar amino acids such as valine, to avoid such errors it has two additional distinct tRNA(Ile)-dependent editing activities. One activity is designated as 'pretransfer' editing and involves the hydrolysis of activated Val-AMP. The other activity is designated 'posttransfer' editing and involves deacylation of mischarged Val-tRNA(Ile). The polypeptide is Isoleucine--tRNA ligase (Chlamydia trachomatis serovar A (strain ATCC VR-571B / DSM 19440 / HAR-13)).